We begin with the raw amino-acid sequence, 29 residues long: Cytochrome b6-f complex subunit 8 (29 aa).

A helical transmembrane segment spans residues 3-23; sequence IDVLGWVALLVVFTWSIAMVV.

The protein belongs to the PetN family. As to quaternary structure, the 4 large subunits of the cytochrome b6-f complex are cytochrome b6, subunit IV (17 kDa polypeptide, PetD), cytochrome f and the Rieske protein, while the 4 small subunits are PetG, PetL, PetM and PetN. The complex functions as a dimer.

It is found in the cellular thylakoid membrane. Its function is as follows. Component of the cytochrome b6-f complex, which mediates electron transfer between photosystem II (PSII) and photosystem I (PSI), cyclic electron flow around PSI, and state transitions. This is Cytochrome b6-f complex subunit 8 from Mastigocladus laminosus (Fischerella sp.).